The following is a 284-amino-acid chain: Origin of replication complex subunit 6 (284 aa).

This sequence belongs to the ORC6 family. Component of the origin recognition complex (ORC) composed of at least ORC1 (ORC1A or ORC1B), ORC2, ORC3, ORC4, ORC5 and ORC6. ORC is regulated in a cell-cycle and development dependent manner. It is sequentially assembled at the exit from anaphase of mitosis and disassembled as cells enter S phase. Interacts directly with ORC2, ORC3, ORC4 and ORC5. Follow a cell-cycle regulation with a peak at the G1/S-phase. Mostly expressed in siliques, flowers, flower buds and mature leaves, and, to a lower exent, in roots, leaves and stems.

Its subcellular location is the nucleus. Functionally, component of the origin recognition complex (ORC) that binds origins of replication. DNA-binding is ATP-dependent. The specific DNA sequences that define origins of replication have not been identified yet. ORC is required to assemble the pre-replication complex necessary to initiate DNA replication. The polypeptide is Origin of replication complex subunit 6 (Arabidopsis thaliana (Mouse-ear cress)).